Here is a 602-residue protein sequence, read N- to C-terminus: UvrABC system protein C (602 aa).

Residues 19–97 (EEPGVYRMIG…IKSLAPRYNI (79 aa)) form the GIY-YIG domain. The UVR domain occupies 206-241 (SEVIDDLTARMHAAAERLAFEEAAACRDQVRVLQAV).

Belongs to the UvrC family. As to quaternary structure, interacts with UvrB in an incision complex.

It is found in the cytoplasm. Functionally, the UvrABC repair system catalyzes the recognition and processing of DNA lesions. UvrC both incises the 5' and 3' sides of the lesion. The N-terminal half is responsible for the 3' incision and the C-terminal half is responsible for the 5' incision. The polypeptide is UvrABC system protein C (Aromatoleum aromaticum (strain DSM 19018 / LMG 30748 / EbN1) (Azoarcus sp. (strain EbN1))).